Here is a 307-residue protein sequence, read N- to C-terminus: Glutaminase (307 aa).

Substrate is bound by residues Ser-67, Asn-117, Glu-161, Asn-168, Tyr-192, Tyr-243, and Val-261.

It belongs to the glutaminase family. As to quaternary structure, homotetramer.

It carries out the reaction L-glutamine + H2O = L-glutamate + NH4(+). The protein is Glutaminase of Streptomyces coelicolor (strain ATCC BAA-471 / A3(2) / M145).